A 245-amino-acid chain; its full sequence is MESPTPQPAPGSATFMEGCKDSLPIVISYIPVAFAFGLNATRLGFSPLESVFFSCIIYAGASQFVITAMLAAGSSLWIAALTVMAMDVRHVLYGPSLRSRIIQRLQKSKTALWAFGLTDEVFAAATAKLVRNNRRWSENWMIGIAFSSWSSWVFGTVIGAFSGSGLLQGYPAVEAALGFMLPALFMSFLLASFQRKQSLCVTAALVGALAGVTLFSIPVAILAGIVCGCLTALIQAFWQGAPDEL.

The Cytoplasmic portion of the chain corresponds to 1 to 24; that stretch reads MESPTPQPAPGSATFMEGCKDSLP. A helical transmembrane segment spans residues 25 to 45; that stretch reads IVISYIPVAFAFGLNATRLGF. At 46-63 the chain is on the periplasmic side; the sequence is SPLESVFFSCIIYAGASQ. Residues 64 to 84 traverse the membrane as a helical segment; it reads FVITAMLAAGSSLWIAALTVM. Over 85–109 the chain is Cytoplasmic; the sequence is AMDVRHVLYGPSLRSRIIQRLQKSK. A helical membrane pass occupies residues 110–130; that stretch reads TALWAFGLTDEVFAAATAKLV. At 131 to 140 the chain is on the periplasmic side; sequence RNNRRWSENW. A helical transmembrane segment spans residues 141-161; that stretch reads MIGIAFSSWSSWVFGTVIGAF. The Cytoplasmic segment spans residues 162–172; sequence SGSGLLQGYPA. The chain crosses the membrane as a helical span at residues 173-193; sequence VEAALGFMLPALFMSFLLASF. At 194-205 the chain is on the periplasmic side; that stretch reads QRKQSLCVTAAL. The chain crosses the membrane as a helical span at residues 206 to 226; the sequence is VGALAGVTLFSIPVAILAGIV. Residues 227 to 245 lie on the Cytoplasmic side of the membrane; the sequence is CGCLTALIQAFWQGAPDEL.

It belongs to the AzlC family.

It localises to the cell inner membrane. The sequence is that of Inner membrane protein YgaZ (ygaZ) from Escherichia coli (strain K12).